Reading from the N-terminus, the 854-residue chain is Zinc finger protein 341 (854 aa).

Residues 53-76 (FLCGKCKKQFNSLPAFMTHKREQC) form a C2H2-type 1; atypical zinc finger. Residues 152–217 (DQPMPQGPPP…GRPNPGGNGV (66 aa)) form a disordered region. Residues 163-176 (QSSLNMHSVPSYLT) show a composition bias toward polar residues. The span at 177 to 210 (QPPPPPPPPPPLPPPPPPQPPPPPPQSLGPPGRP) shows a compositional bias: pro residues. C2H2-type zinc fingers lie at residues 322 to 344 (LKCS…IRSH) and 350 to 372 (FQCI…MQTH). The segment at 399–434 (SRQEDEESTGLGQPLPGAPQPQALSTAGEEEGDKPE) is disordered. Over residues 408 to 422 (GLGQPLPGAPQPQAL) the composition is skewed to low complexity. 9 C2H2-type zinc fingers span residues 445-467 (YLCQ…MTQH), 473-497 (YKCV…IKSH), 503-525 (YRCH…QYSH), 540-564 (YKCV…TATH), 566-588 (FPCP…LPTH), 594-616 (FKCQ…AHIH), 622-644 (YKCS…MLIH), 650-677 (YKCP…ILSH), and 683-705 (HKCA…QRAH). Residues 731 to 763 (CRLGPQKDKDLQTRRPPQRRAAPRSCGSGGRKV) form a disordered region.

This sequence belongs to the krueppel C2H2-type zinc-finger protein family. Binds DNA and to the STAT3 promoter.

The protein localises to the nucleus. Functionally, transcriptional activator of STAT3 involved in the regulation of immune homeostasis. Also able to activate STAT1 transcription. The protein is Zinc finger protein 341 (ZNF341) of Homo sapiens (Human).